The chain runs to 302 residues: Serine/threonine-protein phosphatase alpha-2 isoform (302 aa).

Residues Asp62, His64, Asp90, and Asn122 each contribute to the Mn(2+) site. His123 (proton donor) is an active-site residue. Mn(2+) contacts are provided by His171 and His246.

This sequence belongs to the PPP phosphatase family. PP-1 subfamily. As to quaternary structure, interacts with Nop17l. Interacts with uri; uri inhibits Pp1-87B phosphatase activity. Interacts with Rif1. Mn(2+) is required as a cofactor.

The protein localises to the cytoplasm. The catalysed reaction is O-phospho-L-seryl-[protein] + H2O = L-seryl-[protein] + phosphate. The enzyme catalyses O-phospho-L-threonyl-[protein] + H2O = L-threonyl-[protein] + phosphate. In terms of biological role, is essential for the regulation of mitotic chromosomal segregation as well as regulation of chromatin condensation during interphase. The polypeptide is Serine/threonine-protein phosphatase alpha-2 isoform (Pp1-87B) (Drosophila melanogaster (Fruit fly)).